We begin with the raw amino-acid sequence, 346 residues long: N-acetyl-gamma-glutamyl-phosphate reductase (346 aa).

Cys150 is a catalytic residue.

Belongs to the NAGSA dehydrogenase family. Type 1 subfamily.

The protein resides in the cytoplasm. It carries out the reaction N-acetyl-L-glutamate 5-semialdehyde + phosphate + NADP(+) = N-acetyl-L-glutamyl 5-phosphate + NADPH + H(+). Its pathway is amino-acid biosynthesis; L-arginine biosynthesis; N(2)-acetyl-L-ornithine from L-glutamate: step 3/4. In terms of biological role, catalyzes the NADPH-dependent reduction of N-acetyl-5-glutamyl phosphate to yield N-acetyl-L-glutamate 5-semialdehyde. This chain is N-acetyl-gamma-glutamyl-phosphate reductase, found in Alkaliphilus metalliredigens (strain QYMF).